Here is a 264-residue protein sequence, read N- to C-terminus: Alkaline ceramidase 1 (264 aa).

Residues M1–E27 lie on the Lumenal side of the membrane. 5 residues coordinate Ca(2+): D13, W14, E16, N18, and E27. The chain crosses the membrane as a helical span at residues F28–M48. Residues H49–R57 are Cytoplasmic-facing. A helical transmembrane segment spans residues Y58–M78. Position 77 (H77) interacts with Zn(2+). At T79–S81 the chain is on the lumenal side. Residues F82–I102 form a helical membrane-spanning segment. Topologically, residues W103 to Q119 are cytoplasmic. The chain crosses the membrane as a helical span at residues F120–L137. Residue R138 is a topological domain, lumenal. A helical membrane pass occupies residues P139–Q159. The Cytoplasmic segment spans residues E160–S176. The helical transmembrane segment at V177 to W197 threads the bilayer. Residues Q198 to H206 are Lumenal-facing. Positions 206 and 210 each coordinate Zn(2+). Residues S207 to V227 traverse the membrane as a helical segment. The Cytoplasmic portion of the chain corresponds to D228–C264.

The protein belongs to the alkaline ceramidase family. Zn(2+) is required as a cofactor. As to expression, mainly expressed in epidermis.

It localises to the endoplasmic reticulum membrane. The enzyme catalyses an N-acylsphing-4-enine + H2O = sphing-4-enine + a fatty acid. It catalyses the reaction N-tetracosanoyl-sphing-4-enine + H2O = tetracosanoate + sphing-4-enine. The catalysed reaction is an N-acylsphinganine + H2O = sphinganine + a fatty acid. It carries out the reaction N-(9Z-octadecenoyl)-sphing-4-enine + H2O = sphing-4-enine + (9Z)-octadecenoate. The enzyme catalyses N-(15Z-tetracosenoyl)-sphing-4-enine + H2O = (15Z)-tetracosenoate + sphing-4-enine. Its pathway is lipid metabolism; sphingolipid metabolism. Inhibited by sphingosine. Activity is Ca(2+)-dependent. In terms of biological role, endoplasmic reticulum ceramidase that catalyzes the hydrolysis of ceramides into sphingosine and free fatty acids at alkaline pH. Ceramides, sphingosine, and its phosphorylated form sphingosine-1-phosphate are bioactive lipids that mediate cellular signaling pathways regulating several biological processes including cell proliferation, apoptosis and differentiation. Exhibits a strong substrate specificity towards the natural stereoisomer of ceramides with D-erythro-sphingosine as a backbone and has a higher activity towards very long-chain unsaturated fatty acids like the C24:1-ceramide. May also hydrolyze dihydroceramides to produce dihydrosphingosine. ACER1 is a skin-specific ceramidase that regulates the levels of ceramides, sphingosine and sphingosine-1-phosphate in the epidermis, mediates the calcium-induced differentiation of epidermal keratinocytes and more generally plays an important role in skin homeostasis. The sequence is that of Alkaline ceramidase 1 from Homo sapiens (Human).